Reading from the N-terminus, the 240-residue chain is Probable transcriptional regulatory protein A2cp1_1765 (240 aa).

Belongs to the TACO1 family.

Its subcellular location is the cytoplasm. The sequence is that of Probable transcriptional regulatory protein A2cp1_1765 from Anaeromyxobacter dehalogenans (strain 2CP-1 / ATCC BAA-258).